The sequence spans 64 residues: Putative antitoxin VapB51 (64 aa).

In terms of biological role, possibly the antitoxin component of a type II toxin-antitoxin (TA) system. Its cognate toxin is VapC51. The protein is Putative antitoxin VapB51 of Mycobacterium tuberculosis (strain ATCC 25618 / H37Rv).